Here is a 669-residue protein sequence, read N- to C-terminus: Matrix metalloproteinase-15 (669 aa).

The segment at residues 1–41 is a signal peptide (or 45); it reads MGSDPSAPGRPGWTGSLLGDREEAARPRLLPLLLVLLGCLG. Residues 42-131 constitute a propeptide that is removed on maturation; the sequence is LGVAAEDAEV…KANLRRRRKR (90 aa). Positions 109-116 match the Cysteine switch motif; it reads PRCGVPDQ. Zn(2+) is bound at residue Cys-111. Over 132-625 the chain is Extracellular; it reads YALTGRKWNN…QMEEVARTVN (494 aa). Asn-150 carries N-linked (GlcNAc...) asparagine glycosylation. Residue His-259 participates in Zn(2+) binding. The active site involves Glu-260. Zn(2+)-binding residues include His-263 and His-269. The disordered stretch occupies residues 300–370; sequence QQLYGTPDGQ…RPDQYGPNIC (71 aa). Positions 305 to 322 are enriched in low complexity; sequence TPDGQPQPTQPLPTVTPR. Positions 333–342 are enriched in pro residues; that stretch reads RPPQPPPPGG. Hemopexin repeat units follow at residues 367-415, 416-461, 463-511, and 512-559; these read PNIC…WRGL, PGDI…GLGI, YDRI…QGIP, and ASPK…FMGC. A disulfide bridge connects residues Cys-370 and Cys-559. The disordered stretch occupies residues 574 to 593; it reads RPPFNPHGGAEPGADSAEGD. The residue at position 589 (Ser-589) is a Phosphoserine. The helical transmembrane segment at 626–646 threads the bilayer; it reads VVMVLVPLLLLLCVLGLTYAL. Residues 647-669 are Cytoplasmic-facing; it reads VQMQRKGAPRVLLYCKRSLQEWV.

The protein belongs to the peptidase M10A family. The cofactor is Zn(2+). It depends on Ca(2+) as a cofactor. In terms of processing, the precursor is cleaved by a furin endopeptidase. In terms of tissue distribution, appeared to be synthesized preferentially in liver, placenta, testis, colon and intestine. Substantial amounts are also detected in pancreas, kidney, lung, heart and skeletal muscle.

The protein resides in the membrane. In terms of biological role, endopeptidase that degrades various components of the extracellular matrix. May activate progelatinase A. The protein is Matrix metalloproteinase-15 (MMP15) of Homo sapiens (Human).